The following is a 255-amino-acid chain: Ribonuclease PH (255 aa).

Phosphate is bound by residues R86 and 124–126; that span reads GTR.

Belongs to the RNase PH family. In terms of assembly, homohexameric ring arranged as a trimer of dimers.

The catalysed reaction is tRNA(n+1) + phosphate = tRNA(n) + a ribonucleoside 5'-diphosphate. Its function is as follows. Phosphorolytic 3'-5' exoribonuclease that plays an important role in tRNA 3'-end maturation. Removes nucleotide residues following the 3'-CCA terminus of tRNAs; can also add nucleotides to the ends of RNA molecules by using nucleoside diphosphates as substrates, but this may not be physiologically important. Probably plays a role in initiation of 16S rRNA degradation (leading to ribosome degradation) during starvation. The chain is Ribonuclease PH from Geobacillus sp. (strain WCH70).